The following is a 352-amino-acid chain: Chalcone synthase C (352 aa).

Residue Cys-170 is part of the active site.

The protein belongs to the thiolase-like superfamily. Chalcone/stilbene synthases family.

The catalysed reaction is (E)-4-coumaroyl-CoA + 3 malonyl-CoA + 3 H(+) = 2',4,4',6'-tetrahydroxychalcone + 3 CO2 + 4 CoA. It participates in secondary metabolite biosynthesis; flavonoid biosynthesis. Functionally, the primary product of this enzyme is 4,2',4',6'-tetrahydroxychalcone (also termed naringenin-chalcone or chalcone) which can under specific conditions spontaneously isomerize into naringenin. This is Chalcone synthase C (CHSC) from Ipomoea purpurea (Common morning glory).